The following is a 30-amino-acid chain: Dermaseptin-3.4TR (30 aa).

Expressed by the skin glands.

Its subcellular location is the secreted. Functionally, has antimicrobial activity. The protein is Dermaseptin-3.4TR of Phyllomedusa trinitatis (Trinidad leaf frog).